The sequence spans 246 residues: Proteasome subunit beta type-4 (246 aa).

Positions 1–23 (MTTFSVPIDNGDSMKIAEEESQR) are excised as a propeptide. Thr24 serves as the catalytic Nucleophile.

This sequence belongs to the peptidase T1B family. As to quaternary structure, component of the 20S core complex of the 26S proteasome. The 26S proteasome is composed of a core protease (CP), known as the 20S proteasome, capped at one or both ends by the 19S regulatory particle (RP/PA700). The 20S proteasome core is composed of 28 subunits that are arranged in four stacked rings, resulting in a barrel-shaped structure. The two end rings are each formed by seven alpha subunits, and the two central rings are each formed by seven beta subunits. The catalytic chamber with the active sites is on the inside of the barrel. In terms of tissue distribution, ubiquitous low levels, higher expression in siliques and flowers.

The protein resides in the cytoplasm. Its subcellular location is the nucleus. Non-catalytic component of the proteasome, a multicatalytic proteinase complex which is characterized by its ability to cleave peptides with Arg, Phe, Tyr, Leu, and Glu adjacent to the leaving group at neutral or slightly basic pH. The proteasome has an ATP-dependent proteolytic activity. The protein is Proteasome subunit beta type-4 (PBG1) of Arabidopsis thaliana (Mouse-ear cress).